Here is a 69-residue protein sequence, read N- to C-terminus: Large ribosomal subunit protein bL32c (69 aa).

The protein belongs to the bacterial ribosomal protein bL32 family.

The protein resides in the plastid. It is found in the chloroplast. The chain is Large ribosomal subunit protein bL32c (rpl32) from Marchantia polymorpha (Common liverwort).